The following is a 316-amino-acid chain: MDKLLSLNNFVSVENLENEDVEKLIKRAEYFKNGGEAPHLNKEVYVANLFFENSTRTHTSFEMAERKLGLTVIPFDPGHSSVNKGETLYDTLLTLGALGVDLSVIRHSENNYYEKLINLNPDQHLNMGIINGGDGSGQHPSQCMLDIMTIHEQFGTFKGLKVVIVGDLKNSRVARSNMQLLTRLGAKVYFSGPEYWYSSEFDKYGEYAPLDELIEDMDVVMLLRVQHERHDGDKNEKLFSETEYHKLYGLDEKRYNKLKKDAIIMHPGPVNRGVEWADELVEAPKSRYVTQMKNGVFMRMAMIEAVMRGRKLGGLE.

R56 and T57 together coordinate carbamoyl phosphate. Position 84 (K84) interacts with L-aspartate. Residues R106, H139, and Q142 each contribute to the carbamoyl phosphate site. 2 residues coordinate L-aspartate: R172 and R224. Residues G268 and P269 each coordinate carbamoyl phosphate.

This sequence belongs to the aspartate/ornithine carbamoyltransferase superfamily. ATCase family. As to quaternary structure, heterododecamer (2C3:3R2) of six catalytic PyrB chains organized as two trimers (C3), and six regulatory PyrI chains organized as three dimers (R2).

It carries out the reaction carbamoyl phosphate + L-aspartate = N-carbamoyl-L-aspartate + phosphate + H(+). It participates in pyrimidine metabolism; UMP biosynthesis via de novo pathway; (S)-dihydroorotate from bicarbonate: step 2/3. Catalyzes the condensation of carbamoyl phosphate and aspartate to form carbamoyl aspartate and inorganic phosphate, the committed step in the de novo pyrimidine nucleotide biosynthesis pathway. This Ligilactobacillus salivarius (strain UCC118) (Lactobacillus salivarius) protein is Aspartate carbamoyltransferase catalytic subunit.